A 156-amino-acid chain; its full sequence is 6,7-dimethyl-8-ribityllumazine synthase (156 aa).

Residues phenylalanine 23, alanine 57–glutamate 59, and alanine 81–isoleucine 83 contribute to the 5-amino-6-(D-ribitylamino)uracil site. (2S)-2-hydroxy-3-oxobutyl phosphate is bound at residue glycine 86 to threonine 87. Catalysis depends on histidine 89, which acts as the Proton donor. Phenylalanine 114 is a binding site for 5-amino-6-(D-ribitylamino)uracil. Arginine 128 lines the (2S)-2-hydroxy-3-oxobutyl phosphate pocket.

This sequence belongs to the DMRL synthase family.

It carries out the reaction (2S)-2-hydroxy-3-oxobutyl phosphate + 5-amino-6-(D-ribitylamino)uracil = 6,7-dimethyl-8-(1-D-ribityl)lumazine + phosphate + 2 H2O + H(+). It participates in cofactor biosynthesis; riboflavin biosynthesis; riboflavin from 2-hydroxy-3-oxobutyl phosphate and 5-amino-6-(D-ribitylamino)uracil: step 1/2. Its function is as follows. Catalyzes the formation of 6,7-dimethyl-8-ribityllumazine by condensation of 5-amino-6-(D-ribitylamino)uracil with 3,4-dihydroxy-2-butanone 4-phosphate. This is the penultimate step in the biosynthesis of riboflavin. The polypeptide is 6,7-dimethyl-8-ribityllumazine synthase (Helicobacter pylori (strain J99 / ATCC 700824) (Campylobacter pylori J99)).